We begin with the raw amino-acid sequence, 1088 residues long: RNA-directed RNA polymerase (1088 aa).

In terms of domain architecture, RdRp catalytic spans 501–687 (LSYGDVTRFL…AKRYLAGGKI (187 aa)).

This sequence belongs to the reoviridae RNA-directed RNA polymerase family. As to quaternary structure, interacts with VP3 (Potential). Interacts with VP2; this interaction activates VP1. Interacts with NSP5; this interaction is probably necessary for the formation of functional virus factories. Interacts with NSP2; this interaction is weak. It depends on Mg(2+) as a cofactor.

It is found in the virion. It catalyses the reaction RNA(n) + a ribonucleoside 5'-triphosphate = RNA(n+1) + diphosphate. RNA-directed RNA polymerase that is involved in both transcription and genome replication. Together with VP3 capping enzyme, forms an enzyme complex positioned near the channels situated at each of the five-fold vertices of the core. Following infection, the outermost layer of the virus is lost, leaving a double-layered particle (DLP) made up of the core and VP6 shell. VP1 then catalyzes the transcription of fully conservative plus-strand genomic RNAs that are extruded through the DLP's channels into the cytoplasm where they function as mRNAs for translation of viral proteins. One copy of each of the viral (+)RNAs is also recruited during core assembly, together with newly synthesized polymerase complexes and VP2. The polymerase of these novo-formed particles catalyzes the synthesis of complementary minus-strands leading to dsRNA formation. To do so, the polymerase specifically recognizes and binds 4 bases 5'-UGUG-3' in the conserved 3'-sequence of plus-strand RNA templates. VP2 presumably activates the autoinhibited VP1-RNA complex to coordinate packaging and genome replication. Once dsRNA synthesis is complete, the polymerase switches to the transcriptional mode, thus providing secondary transcription. The protein is RNA-directed RNA polymerase of Rotavirus A (strain RVA/Human/Japan/KU/1995/G1P1A[8]) (RV-A).